Consider the following 466-residue polypeptide: Fumarate hydratase class II (466 aa).

Residues 100–102, R128, 131–134, 141–143, and T189 each bind substrate; these read SGT, HPND, and STN. Residue H190 is the Proton donor/acceptor of the active site. The active site involves S320. Residues S321 and 326–328 each bind substrate; that span reads KVN.

It belongs to the class-II fumarase/aspartase family. Fumarase subfamily. As to quaternary structure, homotetramer.

Its subcellular location is the cytoplasm. It catalyses the reaction (S)-malate = fumarate + H2O. It functions in the pathway carbohydrate metabolism; tricarboxylic acid cycle; (S)-malate from fumarate: step 1/1. In terms of biological role, involved in the TCA cycle. Catalyzes the stereospecific interconversion of fumarate to L-malate. The protein is Fumarate hydratase class II of Prochlorococcus marinus (strain MIT 9313).